A 679-amino-acid chain; its full sequence is DNA ligase (679 aa).

NAD(+) is bound by residues 32–36 (DTLYD), 81–82 (SL), and glutamate 115. Lysine 117 functions as the N6-AMP-lysine intermediate in the catalytic mechanism. The NAD(+) site is built by arginine 138, glutamate 175, lysine 293, and lysine 317. The Zn(2+) site is built by cysteine 411, cysteine 414, cysteine 429, and cysteine 434. The BRCT domain occupies 601-679 (NSSGALLGKT…EAELQKLLST (79 aa)).

This sequence belongs to the NAD-dependent DNA ligase family. LigA subfamily. The cofactor is Mg(2+). Mn(2+) is required as a cofactor.

The catalysed reaction is NAD(+) + (deoxyribonucleotide)n-3'-hydroxyl + 5'-phospho-(deoxyribonucleotide)m = (deoxyribonucleotide)n+m + AMP + beta-nicotinamide D-nucleotide.. In terms of biological role, DNA ligase that catalyzes the formation of phosphodiester linkages between 5'-phosphoryl and 3'-hydroxyl groups in double-stranded DNA using NAD as a coenzyme and as the energy source for the reaction. It is essential for DNA replication and repair of damaged DNA. The protein is DNA ligase of Parasynechococcus marenigrum (strain WH8102).